Here is a 102-residue protein sequence, read N- to C-terminus: ATP-dependent Clp protease adapter protein ClpS (102 aa).

The protein belongs to the ClpS family. Binds to the N-terminal domain of the chaperone ClpA.

Functionally, involved in the modulation of the specificity of the ClpAP-mediated ATP-dependent protein degradation. The chain is ATP-dependent Clp protease adapter protein ClpS from Shewanella pealeana (strain ATCC 700345 / ANG-SQ1).